The sequence spans 1306 residues: Angiotensin-converting enzyme (1306 aa).

The N-terminal stretch at 1 to 28 is a signal peptide; that stretch reads MGAASGRRSPPLLLPLLLLLLPPPPVIL. Residues 29–1256 are Extracellular-facing; it reads ELDPALQPGN…GLNLEEQQAR (1228 aa). 2 consecutive Peptidase M2 domains span residues 40–624 and 643–1222; these read PADE…LGWP and VSDE…LGWP. N-linked (GlcNAc...) asparagine glycans are attached at residues N54, N74, N111, N146, and N160. A disulfide bridge links C157 with C165. Y231 contacts chloride. N318 carries N-linked (GlcNAc...) asparagine glycosylation. C359 and C377 are disulfide-bonded. Zn(2+) is bound at residue H390. The active-site Proton acceptor 1 is E391. Residues H394 and E418 each contribute to the Zn(2+) site. N445 and N509 each carry an N-linked (GlcNAc...) asparagine glycan. H520 acts as the Proton donor 1 in catalysis. Residue N523 is glycosylated (N-linked (GlcNAc...) asparagine). R529 lines the chloride pocket. Cysteines 545 and 557 form a disulfide. N673, N695, N714, and N760 each carry an N-linked (GlcNAc...) asparagine glycan. An intrachain disulfide couples C757 to C763. The chloride site is built by R791 and Y829. A glycan (N-linked (GlcNAc...) asparagine) is linked at N942. An intrachain disulfide couples C957 to C975. Residue H988 coordinates Zn(2+). The active-site Proton acceptor 2 is E989. Zn(2+)-binding residues include H992 and E1016. Chloride is bound by residues W1090 and R1094. H1118 serves as the catalytic Proton donor 2. R1127 lines the chloride pocket. Residues C1143 and C1155 are joined by a disulfide bond. N-linked (GlcNAc...) asparagine glycans are attached at residues N1191 and N1225. Positions 1215–1256 are juxtamembrane stalk; sequence HGEKLGWPQYNWTPNSARLEGPFVGSGRVNFLGLNLEEQQAR. The helical transmembrane segment at 1257–1277 threads the bilayer; that stretch reads VGQWVLLFLGVALLVATLGLT. The Cytoplasmic segment spans residues 1278–1306; that stretch reads QRLFSIRHHSLRRPHRGPQFGSEVELRHS. The residue at position 1299 (S1299) is a Phosphoserine.

This sequence belongs to the peptidase M2 family. As to quaternary structure, monomer and homodimer; homodimerizes following binding to an inhibitor. Interacts with calmodulin (CALM1, CALM2 or CALM3); interaction takes place in the cytoplasmic region and regulates phosphorylation and proteolytic cleavage. The cofactor is Zn(2+). It depends on chloride as a cofactor. In terms of processing, produced following proteolytic cleavage by secretase enzymes that cleave the transmembrane form in the juxtamembrane stalk region upstream of the transmembrane region. Cleavage can take place at different sites of the juxtamembrane stalk region. Post-translationally, phosphorylated by CK2 on Ser-1299; which allows membrane retention. Phosphorylated on tyrosine residues on its extracellular part, promoting cleavage by secretase enzymes and formation of the soluble form (Angiotensin-converting enzyme, soluble form).

It localises to the cell membrane. It is found in the cytoplasm. The protein resides in the secreted. It carries out the reaction Release of a C-terminal dipeptide, oligopeptide-|-Xaa-Yaa, when Xaa is not Pro, and Yaa is neither Asp nor Glu. Thus, conversion of angiotensin I to angiotensin II, with increase in vasoconstrictor activity, but no action on angiotensin II.. It catalyses the reaction angiotensin I + H2O = L-histidyl-L-leucine + angiotensin II. The catalysed reaction is bradykinin + H2O = L-Phe-L-Arg + bradykinin(1-7). The enzyme catalyses substance P + H2O = substance P(1-9) + L-Leu-L-Met-NH2. It carries out the reaction substance P + H2O = substance P(1-8) + Gly-L-Leu-L-Met-NH2. It catalyses the reaction substance P + H2O = L-Phe-L-Phe-Gly-L-Leu-L-Met-NH2 + substance P(1-6). The catalysed reaction is neurotensin + H2O = neurotensin(1-11) + L-isoleucyl-L-leucine. The enzyme catalyses goralatide + H2O = N-acetyl-L-seryl-L-aspartate + L-lysyl-L-proline. It carries out the reaction Met-enkephalin + H2O = L-phenylalanyl-L-methionine + L-tyrosylglycylglycine. It catalyses the reaction Leu-enkephalin + H2O = L-tyrosylglycylglycine + L-phenylalanyl-L-leucine. The catalysed reaction is Met-enkephalin-Arg-Phe + H2O = L-arginyl-L-phenylalanine + Met-enkephalin. Its activity is regulated as follows. The dipeptidyl carboxypeptidase activity is strongly activated by chloride. The dipeptidyl carboxypeptidase activity is specifically inhibited by lisinopril, captopril and enalaprilat. Dipeptidyl carboxypeptidase that removes dipeptides from the C-terminus of a variety of circulating hormones, such as angiotensin I, bradykinin or enkephalins, thereby playing a key role in the regulation of blood pressure, electrolyte homeostasis or synaptic plasticity. Composed of two similar catalytic domains, each possessing a functional active site, with different selectivity for substrates. Plays a major role in the angiotensin-renin system that regulates blood pressure and sodium retention by the kidney by converting angiotensin I to angiotensin II, resulting in an increase of the vasoconstrictor activity of angiotensin. Also able to inactivate bradykinin, a potent vasodilator, and therefore enhance the blood pressure response. Acts as a regulator of synaptic transmission by mediating cleavage of neuropeptide hormones, such as substance P, neurotensin or enkephalins. Catalyzes degradation of different enkephalin neuropeptides (Met-enkephalin, Leu-enkephalin, Met-enkephalin-Arg-Phe and possibly Met-enkephalin-Arg-Gly-Leu). Acts as a regulator of synaptic plasticity in the nucleus accumbens of the brain by mediating cleavage of Met-enkephalin-Arg-Phe, a strong ligand of Mu-type opioid receptor OPRM1, into Met-enkephalin. Met-enkephalin-Arg-Phe cleavage by ACE decreases activation of OPRM1, leading to long-term synaptic potentiation of glutamate release. Also acts as a regulator of hematopoietic stem cell differentiation by mediating degradation of hemoregulatory peptide N-acetyl-SDKP (AcSDKP). Acts as a regulator of cannabinoid signaling pathway by mediating degradation of hemopressin, an antagonist peptide of the cannabinoid receptor CNR1. Involved in amyloid-beta metabolism by catalyzing degradation of Amyloid-beta protein 40 and Amyloid-beta protein 42 peptides, thereby preventing plaque formation. Catalyzes cleavage of cholecystokinin (maturation of Cholecystokinin-8 and Cholecystokinin-5) and Gonadoliberin-1 (both maturation and degradation) hormones. Degradation of hemoregulatory peptide N-acetyl-SDKP (AcSDKP) and amyloid-beta proteins is mediated by the N-terminal catalytic domain, while angiotensin I and cholecystokinin cleavage is mediated by the C-terminal catalytic region. In terms of biological role, soluble form that is released in blood plasma and other body fluids following proteolytic cleavage in the juxtamembrane stalk region. The protein is Angiotensin-converting enzyme of Bos taurus (Bovine).